Here is a 352-residue protein sequence, read N- to C-terminus: NAD(P)H pyrophosphatase NUDT13, mitochondrial (352 aa).

The transit peptide at 1–20 directs the protein to the mitochondrion; it reads MSLYCGIACRRKFFWCYRLL. A Nudix hydrolase domain is found at 196 to 323; the sequence is PQMAPVAITL…PYTQQQNGTF (128 aa). The Nudix box motif lies at 216–240; that stretch reads RQSSFPKGMYSALAGFCDIGESVEE.

This sequence belongs to the Nudix hydrolase family. Requires Mg(2+) as cofactor. It depends on Mn(2+) as a cofactor. In terms of tissue distribution, highly expressed in metastasis-suppressed chromosome 6 melanoma hybrids.

It localises to the mitochondrion. It catalyses the reaction NADH + H2O = reduced beta-nicotinamide D-ribonucleotide + AMP + 2 H(+). It carries out the reaction NAD(+) + H2O = beta-nicotinamide D-ribonucleotide + AMP + 2 H(+). The enzyme catalyses NADPH + H2O = reduced beta-nicotinamide D-ribonucleotide + adenosine 2',5'-bisphosphate + 2 H(+). In terms of biological role, NAD(P)H pyrophosphatase that hydrolyzes NADH into NMNH and AMP, and NADPH into NMNH and 2',5'-ADP. Has a marked preference for the reduced pyridine nucleotides. Does not show activity toward NAD-capped RNAs; the NAD-cap is an atypical cap present at the 5'-end of some RNAs. The chain is NAD(P)H pyrophosphatase NUDT13, mitochondrial from Homo sapiens (Human).